The chain runs to 350 residues: Biotin synthase (350 aa).

The Radical SAM core domain occupies 38-256; the sequence is NHVQVSTLLS…IAVARIMMPK (219 aa). [4Fe-4S] cluster is bound by residues C53, C57, and C60. [2Fe-2S] cluster contacts are provided by C97, C128, C188, and R260.

Belongs to the radical SAM superfamily. Biotin synthase family. Homodimer. [4Fe-4S] cluster is required as a cofactor. It depends on [2Fe-2S] cluster as a cofactor.

The catalysed reaction is (4R,5S)-dethiobiotin + (sulfur carrier)-SH + 2 reduced [2Fe-2S]-[ferredoxin] + 2 S-adenosyl-L-methionine = (sulfur carrier)-H + biotin + 2 5'-deoxyadenosine + 2 L-methionine + 2 oxidized [2Fe-2S]-[ferredoxin]. It functions in the pathway cofactor biosynthesis; biotin biosynthesis; biotin from 7,8-diaminononanoate: step 2/2. In terms of biological role, catalyzes the conversion of dethiobiotin (DTB) to biotin by the insertion of a sulfur atom into dethiobiotin via a radical-based mechanism. The polypeptide is Biotin synthase (Vibrio cholerae serotype O1 (strain ATCC 39541 / Classical Ogawa 395 / O395)).